An 89-amino-acid polypeptide reads, in one-letter code: Small ribosomal subunit protein uS15 (89 aa).

The protein belongs to the universal ribosomal protein uS15 family. As to quaternary structure, part of the 30S ribosomal subunit. Forms a bridge to the 50S subunit in the 70S ribosome, contacting the 23S rRNA.

One of the primary rRNA binding proteins, it binds directly to 16S rRNA where it helps nucleate assembly of the platform of the 30S subunit by binding and bridging several RNA helices of the 16S rRNA. Its function is as follows. Forms an intersubunit bridge (bridge B4) with the 23S rRNA of the 50S subunit in the ribosome. This Lactobacillus delbrueckii subsp. bulgaricus (strain ATCC 11842 / DSM 20081 / BCRC 10696 / JCM 1002 / NBRC 13953 / NCIMB 11778 / NCTC 12712 / WDCM 00102 / Lb 14) protein is Small ribosomal subunit protein uS15.